Consider the following 254-residue polypeptide: 5'-nucleotidase SurE (254 aa).

4 residues coordinate a divalent metal cation: aspartate 8, aspartate 9, serine 39, and asparagine 91.

The protein belongs to the SurE nucleotidase family. Requires a divalent metal cation as cofactor.

It is found in the cytoplasm. It carries out the reaction a ribonucleoside 5'-phosphate + H2O = a ribonucleoside + phosphate. Functionally, nucleotidase that shows phosphatase activity on nucleoside 5'-monophosphates. The polypeptide is 5'-nucleotidase SurE (Pseudoalteromonas translucida (strain TAC 125)).